The primary structure comprises 239 residues: Large ribosomal subunit protein uL2 (239 aa).

Disordered regions lie at residues 1-28 (MGKRILPQRMGRGTPTFRSPSHRRVGPA) and 199-239 (SHPH…RRKG). A compositionally biased stretch (basic residues) spans 225 to 239 (KVGHIAARRTGRRKG).

The protein belongs to the universal ribosomal protein uL2 family. As to quaternary structure, part of the 50S ribosomal subunit. Forms a bridge to the 30S subunit in the 70S ribosome.

One of the primary rRNA binding proteins. Required for association of the 30S and 50S subunits to form the 70S ribosome, for tRNA binding and peptide bond formation. It has been suggested to have peptidyltransferase activity; this is somewhat controversial. Makes several contacts with the 16S rRNA in the 70S ribosome. The chain is Large ribosomal subunit protein uL2 from Staphylothermus marinus (strain ATCC 43588 / DSM 3639 / JCM 9404 / F1).